Reading from the N-terminus, the 130-residue chain is Small ribosomal subunit protein uS9 (130 aa).

It belongs to the universal ribosomal protein uS9 family.

In Aromatoleum aromaticum (strain DSM 19018 / LMG 30748 / EbN1) (Azoarcus sp. (strain EbN1)), this protein is Small ribosomal subunit protein uS9.